The primary structure comprises 98 residues: NADH-ubiquinone oxidoreductase chain 4L (98 aa).

Helical transmembrane passes span 1–21 (MMSI…GVLI), 28–48 (STLL…ALLI), and 59–79 (APLI…ALLV).

This sequence belongs to the complex I subunit 4L family. As to quaternary structure, core subunit of respiratory chain NADH dehydrogenase (Complex I) which is composed of 45 different subunits.

It is found in the mitochondrion inner membrane. It carries out the reaction a ubiquinone + NADH + 5 H(+)(in) = a ubiquinol + NAD(+) + 4 H(+)(out). Functionally, core subunit of the mitochondrial membrane respiratory chain NADH dehydrogenase (Complex I) which catalyzes electron transfer from NADH through the respiratory chain, using ubiquinone as an electron acceptor. Part of the enzyme membrane arm which is embedded in the lipid bilayer and involved in proton translocation. The polypeptide is NADH-ubiquinone oxidoreductase chain 4L (MT-ND4L) (Osphranter robustus (Wallaroo)).